Consider the following 159-residue polypeptide: Dihydrofolate reductase (159 aa).

Residues 2-157 form the DHFR domain; it reads TLSILVAHDL…IPHTFLHLIR (156 aa). A substrate-binding site is contributed by 6-8; the sequence is LVA. Residues 7–8 and 15–20 contribute to the NADP(+) site; these read VA and IGFENQ. D28 contacts substrate. Residue 44-47 coordinates NADP(+); sequence GRKT. Position 58 (R58) interacts with substrate. NADP(+) contacts are provided by residues 63 to 66 and 93 to 98; these read LTSD and FGGQTL. T112 lines the substrate pocket.

It belongs to the dihydrofolate reductase family.

It catalyses the reaction (6S)-5,6,7,8-tetrahydrofolate + NADP(+) = 7,8-dihydrofolate + NADPH + H(+). Its pathway is cofactor biosynthesis; tetrahydrofolate biosynthesis; 5,6,7,8-tetrahydrofolate from 7,8-dihydrofolate: step 1/1. In terms of biological role, key enzyme in folate metabolism. Catalyzes an essential reaction for de novo glycine and purine synthesis, and for DNA precursor synthesis. In Staphylococcus aureus (strain COL), this protein is Dihydrofolate reductase (folA).